A 318-amino-acid polypeptide reads, in one-letter code: Protein-methionine-sulfoxide reductase catalytic subunit MsrP (318 aa).

A signal peptide (tat-type signal) is located at residues 1 to 40; the sequence is MKQLMMSDVTPEEIFNQRRQIIKSMGLGIATLGLPNIAFA. Residues Asn72, 75–76, Cys130, Thr165, Asn217, Arg222, and 233–235 contribute to the Mo-molybdopterin site; these read YE and SIK.

The protein belongs to the MsrP family. Heterodimer of a catalytic subunit (MsrP) and a heme-binding subunit (MsrQ). Mo-molybdopterin serves as cofactor. Post-translationally, predicted to be exported by the Tat system. The position of the signal peptide cleavage has not been experimentally proven.

The protein resides in the periplasm. The catalysed reaction is L-methionyl-[protein] + a quinone + H2O = L-methionyl-(S)-S-oxide-[protein] + a quinol. It carries out the reaction L-methionyl-[protein] + a quinone + H2O = L-methionyl-(R)-S-oxide-[protein] + a quinol. Its function is as follows. Part of the MsrPQ system that repairs oxidized periplasmic proteins containing methionine sulfoxide residues (Met-O), using respiratory chain electrons. Thus protects these proteins from oxidative-stress damage caused by reactive species of oxygen and chlorine generated by the host defense mechanisms. MsrPQ is essential for the maintenance of envelope integrity under bleach stress, rescuing a wide series of structurally unrelated periplasmic proteins from methionine oxidation. The catalytic subunit MsrP is non-stereospecific, being able to reduce both (R-) and (S-) diastereoisomers of methionine sulfoxide. The chain is Protein-methionine-sulfoxide reductase catalytic subunit MsrP from Haemophilus ducreyi (strain 35000HP / ATCC 700724).